A 642-amino-acid polypeptide reads, in one-letter code: Wall-associated receptor kinase-like 6 (642 aa).

An N-terminal signal peptide occupies residues 1–28 (MKKTKTYQVFCIAALSVLTLQLINGSSA). Over 29–357 (ATPPPPNSNS…PKITKPEKAS (329 aa)) the chain is Extracellular. N-linked (GlcNAc...) asparagine glycans are attached at residues asparagine 37, asparagine 72, asparagine 95, asparagine 137, asparagine 216, asparagine 240, and asparagine 276. The segment at 289-346 (CSCEYDYFSGMSYRICYCNYGYTGNPYLRHGCIDIDECEGHHNCGEGTCVNMPGTHSC) is atypical EGF-like. 3 cysteine pairs are disulfide-bonded: cysteine 291-cysteine 304, cysteine 326-cysteine 337, and cysteine 332-cysteine 346. Residues 358-378 (VLQGVLISLGVLLFVLGILGL) form a helical membrane-spanning segment. At 379–642 (YKFIKKRTRI…KPLSRKRIGN (264 aa)) the chain is on the cytoplasmic side. The 211-residue stretch at 432–642 (FSMNRVLGQG…KPLSRKRIGN (211 aa)) folds into the Protein kinase domain. ATP-binding positions include 438–446 (LGQGGQGTV) and lysine 460. Residue tyrosine 505 is modified to Phosphotyrosine. The active-site Proton acceptor is aspartate 559. 2 positions are modified to phosphothreonine: threonine 593 and threonine 598. Tyrosine 606 is subject to Phosphotyrosine.

It belongs to the protein kinase superfamily. Ser/Thr protein kinase family. In terms of tissue distribution, slightly expressed in the whole plant.

It is found in the membrane. It carries out the reaction L-seryl-[protein] + ATP = O-phospho-L-seryl-[protein] + ADP + H(+). It catalyses the reaction L-threonyl-[protein] + ATP = O-phospho-L-threonyl-[protein] + ADP + H(+). In terms of biological role, serine/threonine-protein kinase that may function as a signaling receptor of extracellular matrix component. This Arabidopsis thaliana (Mouse-ear cress) protein is Wall-associated receptor kinase-like 6 (WAKL6).